Here is a 304-residue protein sequence, read N- to C-terminus: MDKTIPGSFNSRTLIPNLLIIISGLVGLIGNAMVFWLLGFRLARNAFSVYILNLALADFLFLLCHIIDSTLLLLKFSYPNIIFLPCFNTVMMVPYIAGLSMLSAISTERCLSVVCPIWYRCRRPKHTSTVMCSAIWVLSLLICILNRYFCGFLDTKYEKDNRCLASNFFTAACLIFLFVVLCLSSLALLVRLFCGAGRMKLTRLYATIMLTVLVFLLCGLPFGIHWFLLIWIKIDYGKFAYGLYLAALVLTAVNSCANPIIYFFVGSFRHQKHQTLKMVLQRALQDTPETAENTVEMSSSKVEP.

Residues 1–17 are Extracellular-facing; it reads MDKTIPGSFNSRTLIPN. A helical membrane pass occupies residues 18–38; sequence LLIIISGLVGLIGNAMVFWLL. The Cytoplasmic portion of the chain corresponds to 39-46; it reads GFRLARNA. A helical transmembrane segment spans residues 47 to 67; the sequence is FSVYILNLALADFLFLLCHII. The Extracellular portion of the chain corresponds to 68-80; that stretch reads DSTLLLLKFSYPN. Residues 81-101 traverse the membrane as a helical segment; it reads IIFLPCFNTVMMVPYIAGLSM. The Cytoplasmic segment spans residues 102-132; it reads LSAISTERCLSVVCPIWYRCRRPKHTSTVMC. The chain crosses the membrane as a helical span at residues 133–153; that stretch reads SAIWVLSLLICILNRYFCGFL. At 154 to 167 the chain is on the extracellular side; the sequence is DTKYEKDNRCLASN. A helical membrane pass occupies residues 168 to 188; it reads FFTAACLIFLFVVLCLSSLAL. Residues 189-211 lie on the Cytoplasmic side of the membrane; the sequence is LVRLFCGAGRMKLTRLYATIMLT. The chain crosses the membrane as a helical span at residues 212-232; it reads VLVFLLCGLPFGIHWFLLIWI. Over 233-244 the chain is Extracellular; that stretch reads KIDYGKFAYGLY. A helical transmembrane segment spans residues 245 to 265; that stretch reads LAALVLTAVNSCANPIIYFFV. The Cytoplasmic portion of the chain corresponds to 266-304; the sequence is GSFRHQKHQTLKMVLQRALQDTPETAENTVEMSSSKVEP.

It belongs to the G-protein coupled receptor 1 family. Mas subfamily. In terms of tissue distribution, expressed in a subset of IB4-positive small diameter nociceptive dorsal root neurons.

Its subcellular location is the cell membrane. Its function is as follows. Orphan receptor activated by a subset of RFamide-family neuropeptides such as FLRF-amide and FMRF-amide. Mediates its action by association with G proteins that activate a phosphatidylinositol-calcium second messenger system. Its effect is mediated by G(q) and G(11) proteins. May regulate the function of nociceptive neurons by modulation of pain perception. The protein is Mas-related G-protein coupled receptor member A (Mrgpra) of Rattus norvegicus (Rat).